A 148-amino-acid chain; its full sequence is uncharacterized protein (148 aa).

One can recognise an HTH asnC-type domain in the interval 3–64 (LDALDRKILE…KLNYESIGYD (62 aa)). Positions 22-41 (YREIAKDLNVAVGTIYNRIK) form a DNA-binding region, H-T-H motif.

This is an uncharacterized protein from Pyrococcus horikoshii (strain ATCC 700860 / DSM 12428 / JCM 9974 / NBRC 100139 / OT-3).